The following is a 993-amino-acid chain: uncharacterized protein (993 aa).

The N-terminal stretch at 1–24 is a signal peptide; the sequence is MLLFKFNFTTAFLFTILAFAQARS. Residues N7, N44, N89, N121, N138, N161, N169, N232, N361, N386, N393, N423, N447, N480, and N488 are each glycosylated (N-linked (GlcNAc...) asparagine). E504 is a catalytic residue. N-linked (GlcNAc...) asparagine glycans are attached at residues N545, N548, and N614. The active-site Proton donor is D672. N-linked (GlcNAc...) asparagine glycans are attached at residues N673, N814, N826, N835, N846, N910, N940, and N987.

It belongs to the glycosyl hydrolase 31 family.

This is an uncharacterized protein from Schizosaccharomyces pombe (strain 972 / ATCC 24843) (Fission yeast).